The primary structure comprises 187 residues: Large ribosomal subunit protein uL22 (187 aa).

2 stretches are compositionally biased toward basic and acidic residues: residues 158–168 (TKATDESEQAK) and 178–187 (RQKEKMMRNE). A disordered region spans residues 158–187 (TKATDESEQAKKKLSKKKLQRQKEKMMRNE).

It belongs to the universal ribosomal protein uL22 family.

The sequence is that of Large ribosomal subunit protein uL22 (RpL17) from Anopheles gambiae (African malaria mosquito).